The primary structure comprises 89 residues: Neuropeptide S (89 aa).

The signal sequence occupies residues M1–C23. Residues H24–M67 constitute a propeptide that is removed on maturation.

It is found in the secreted. Its function is as follows. Modulates arousal and anxiety. May play an important anorexigenic role. Binds to its receptor NPSR1 with nanomolar affinity to increase intracellular calcium concentrations. The protein is Neuropeptide S (NPS) of Bos taurus (Bovine).